We begin with the raw amino-acid sequence, 805 residues long: Shutoff protein (805 aa).

Positions 1–88 (MESVEKEDSL…QVGRGDQRHG (88 aa)) are disordered. Over residues 18–29 (TTASTDAANAPT) the composition is skewed to polar residues. Composition is skewed to basic and acidic residues over residues 59-70 (RSVPTEDKKQDQ) and 79-88 (QVGRGDQRHG). The interval 280-345 (VMSELIVRRA…AVLVTVELEC (66 aa)) is binding to host EIF4G. The region spanning 348-466 (RFFADPEMQR…DLWTAFNERS (119 aa)) is the RRM domain. Residues Tyr-365 and Tyr-682 each carry the phosphotyrosine; by host modification. Residues 684 to 805 (DPQSGEELNP…AGTACSPTQP (122 aa)) are disordered. Residues 726 to 742 (GRGGILGQSGRGGFGRG) are compositionally biased toward gly residues. Residues 754-763 (RSFRGRRGVR) show a composition bias toward basic residues.

This sequence belongs to the adenoviridae shutoff protein family. Monomer. Interacts with hexon protein; this interaction allows chaperoning and trimerization of hexon proteins. Interacts (via N-terminus) with host initiation factor EIF4G (via C-terminus). Interacts (via RRM domain) with viral mRNAs that contain the tripartite leader; this interaction allows ribosome shunting and expression of viral late mRNAs. In terms of processing, might be cleaved by the viral protease. Post-translationally, phosphorylated. Tyrosine phosphorylation enhances preferential binding to tripartite leader mRNAs and allows ribosome shunting. Methylated. Asymmetric dimethylation by host PRMT1 of the Arg/Gly-rich region may regulate shutoff protein binding to hexon and promote the capsid assembly in the nucleus.

It localises to the host cytoplasm. Its function is as follows. Protein that inhibits host translation while promoting late viral translation by ribosome shunting. Blocks host cap-dependent translation by binding to eIF4G, displacing MKNK1 from cap initiation complexes and preventing EIF4E phosphorylation. Binds to the tripartite leader sequence of viral late mRNAs and recruits host eIF4G, PABPC1/poly-A binding protein and 40S ribosomes subunits on viral mRNAs, allowing ribosome shunting and efficient translation of late viral mRNAs even though conventional translation via ribosome scanning from the cap has been shut off in the host cell. During assembly, acts as a chaperone protein that helps hexon proteins assembly into trimers. This is Shutoff protein from Homo sapiens (Human).